The chain runs to 430 residues: Glutamate-1-semialdehyde 2,1-aminomutase (430 aa).

N6-(pyridoxal phosphate)lysine is present on lysine 267.

Belongs to the class-III pyridoxal-phosphate-dependent aminotransferase family. HemL subfamily. Homodimer. It depends on pyridoxal 5'-phosphate as a cofactor.

Its subcellular location is the cytoplasm. The catalysed reaction is (S)-4-amino-5-oxopentanoate = 5-aminolevulinate. Its pathway is porphyrin-containing compound metabolism; protoporphyrin-IX biosynthesis; 5-aminolevulinate from L-glutamyl-tRNA(Glu): step 2/2. This is Glutamate-1-semialdehyde 2,1-aminomutase from Anaeromyxobacter dehalogenans (strain 2CP-1 / ATCC BAA-258).